The chain runs to 91 residues: MAHKKGVGSSRNGRDSNPKMRGVKRFGGEHVRAGNIIVRQCGTKIKPGENVGVGRDWTLYALVDGVVQFGHYSRTQKMVSVIPVTAAETAH.

Positions 1-26 (MAHKKGVGSSRNGRDSNPKMRGVKRF) are disordered.

It belongs to the bacterial ribosomal protein bL27 family.

The polypeptide is Large ribosomal subunit protein bL27 (Chloroflexus aurantiacus (strain ATCC 29366 / DSM 635 / J-10-fl)).